Consider the following 598-residue polypeptide: Nuclear receptor subfamily 4 group A member 2 (598 aa).

Positions 1 to 22 (MPCVQAQYGSSPQGASPASQSY) are disordered. The span at 8-22 (YGSSPQGASPASQSY) shows a compositional bias: low complexity. Residues 260–335 (EGLCAVCGDN…VGMVKEVVRT (76 aa)) constitute a DNA-binding region (nuclear receptor). 2 consecutive NR C4-type zinc fingers follow at residues 263-283 (CAVC…CEGC) and 299-323 (CLAN…FQKC). Residues 287–314 (FKRTVQKNAKYVCLANKNCPVDKRRRNR) carry the Bipartite nuclear localization signal (NLS1) motif. Positions 337-361 (SLKGRRGRLPSKPKSPQDPSPPSPP) are disordered. The Nuclear localization signal (NLS1) signature appears at 338–350 (LKGRRGRLPSKPK). Pro residues predominate over residues 352 to 361 (PQDPSPPSPP). The 236-residue stretch at 360-595 (PPVSLISALV…AIIDKLFLDT (236 aa)) folds into the NR LBD domain. The short motif at 443–452 (FLELFVLRLA) is the nuclear export sequence (NES1) element. The nuclear export sequence (NES2) signature appears at 568–577 (QGLQRIFYLK).

This sequence belongs to the nuclear hormone receptor family. NR4 subfamily. In terms of assembly, interacts with SFPQ, NCOR2, SIN3A and HADC1. The interaction with NCOR2 increases in the absence of PITX3. Interacts with PER2. As to expression, brain.

The protein resides in the cytoplasm. The protein localises to the nucleus. Functionally, transcriptional regulator which is important for the differentiation and maintenance of meso-diencephalic dopaminergic (mdDA) neurons during development. It is crucial for expression of a set of genes such as SLC6A3, SLC18A2, TH and DRD2 which are essential for development of mdDA neurons. This is Nuclear receptor subfamily 4 group A member 2 (Nr4a2) from Mus musculus (Mouse).